The sequence spans 586 residues: Actin-related protein 9 (586 aa).

Positions 141–169 (STPIVDKDADVDPLQRSTPDDTEPNSEEN) are disordered.

It belongs to the actin family. ARP8 subfamily.

The polypeptide is Actin-related protein 9 (ARP9) (Oryza sativa subsp. japonica (Rice)).